Consider the following 209-residue polypeptide: Uracil phosphoribosyltransferase (209 aa).

Residues Arg-79, Arg-104, and 131–139 (DPMLATGNS) each bind 5-phospho-alpha-D-ribose 1-diphosphate. Residues Ile-194 and 199 to 201 (GDA) each bind uracil. Asp-200 lines the 5-phospho-alpha-D-ribose 1-diphosphate pocket.

It belongs to the UPRTase family. It depends on Mg(2+) as a cofactor.

The enzyme catalyses UMP + diphosphate = 5-phospho-alpha-D-ribose 1-diphosphate + uracil. It functions in the pathway pyrimidine metabolism; UMP biosynthesis via salvage pathway; UMP from uracil: step 1/1. With respect to regulation, allosterically activated by GTP. Functionally, catalyzes the conversion of uracil and 5-phospho-alpha-D-ribose 1-diphosphate (PRPP) to UMP and diphosphate. In Agrobacterium fabrum (strain C58 / ATCC 33970) (Agrobacterium tumefaciens (strain C58)), this protein is Uracil phosphoribosyltransferase.